A 236-amino-acid chain; its full sequence is Mitochondrial coenzyme A diphosphatase NUDT8 (236 aa).

A Nudix hydrolase domain is found at 25-172; the sequence is LRARPASAAV…HFRYTLPVFL (148 aa). At Lys-70 the chain carries N6-succinyllysine. The Nudix box motif lies at 70–91; it reads KCDPADQDVVHTALRETREELG. The Mg(2+) site is built by Glu-85 and Glu-89.

It belongs to the Nudix hydrolase family. Monomer. Mg(2+) serves as cofactor. The cofactor is Mn(2+).

The protein resides in the mitochondrion. The catalysed reaction is an acyl-CoA + H2O = an acyl-4'-phosphopantetheine + adenosine 3',5'-bisphosphate + 2 H(+). It catalyses the reaction CoA + H2O = (R)-4'-phosphopantetheine + adenosine 3',5'-bisphosphate + 2 H(+). It carries out the reaction acetyl-CoA + H2O = S-acetyl-4'-phosphopantetheine + adenosine 3',5'-bisphosphate + 2 H(+). The enzyme catalyses butanoyl-CoA + H2O = S-butanoyl-4'-phosphopantetheine + adenosine 3',5'-bisphosphate + 2 H(+). The catalysed reaction is hexanoyl-CoA + H2O = hexanoyl-4'-phosphopantetheine + adenosine 3',5'-bisphosphate + 2 H(+). It catalyses the reaction octanoyl-CoA + H2O = S-octanoyl-4'-phosphopantetheine + adenosine 3',5'-bisphosphate + 2 H(+). It carries out the reaction propanoyl-CoA + H2O = propanoyl-4'-phosphopantetheine + adenosine 3',5'-bisphosphate + 2 H(+). The enzyme catalyses malonyl-CoA + H2O = malonyl-4'-phosphopantetheine + adenosine 3',5'-bisphosphate + 2 H(+). The catalysed reaction is succinyl-CoA + H2O = succinyl-4'-phosphopantetheine + adenosine 3',5'-bisphosphate + 2 H(+). It catalyses the reaction a 5'-end CoA-ribonucleoside in mRNA + H2O = a 5'-end phospho-adenosine-phospho-ribonucleoside in mRNA + (R)-4'-phosphopantetheine + 2 H(+). Acyl-CoA diphosphatase that mediates the hydrolysis of a wide range of CoA and CoA esters yielding 3',5'-ADP and the corresponding 4'-phosphopantetheine derivative as products. Hydrolyzes short- and medium-chain acyl-CoAs, exhibiting the highest activity toward free CoA, hexanoyl-CoA, and octanoyl-CoA and the lowest activity against acetyl-CoA. Exhibits decapping activity towards dpCoA-capped RNAs in vitro. This is Mitochondrial coenzyme A diphosphatase NUDT8 (NUDT8) from Homo sapiens (Human).